A 956-amino-acid polypeptide reads, in one-letter code: Ubiquitin carboxyl-terminal hydrolase CYLD (956 aa).

The interval 106–593 is interaction with TRIP; the sequence is CEERFSLFKN…LEIMIGKKKG (488 aa). 2 CAP-Gly domains span residues 153-198 and 253-286; these read LAER…VFVA and DVLP…VQLC. Residues 309-353 form a disordered region; that stretch reads SVTQERRPPKLAFMSRGVGDKGSSSHNKPKATGSTSDPGNRNRSE. The span at 330–349 shows a compositional bias: polar residues; sequence GSSSHNKPKATGSTSDPGNR. Serine 387 is modified (phosphoserine). Residues 392–411 form a disordered region; the sequence is STDFDRSSPPLQPPPVNSLS. Residues 394-469 form an interaction with TRAF2 region; sequence DFDRSSPPLQ…LAMPPGNSHG (76 aa). Phosphoserine occurs at positions 418 and 422. An interaction with IKBKG/NEMO region spans residues 470–684; sequence LEVGSLAEVK…FTSEEKDPEE (215 aa). Residues 492–535 form the CAP-Gly 3 domain; sequence GQPPGLNEVLAGLELEDECAGCTDGTFRGTRYFTCALKKALFVK. Residues 592 to 950 enclose the USP domain; it reads KGIQGHYNSC…DAYMCMYQSP (359 aa). Cysteine 601 functions as the Nucleophile in the catalytic mechanism. The tract at residues 781-833 is B-box; the sequence is LEDTPRQCRICGGLAMYECRECYDDPDISAGKIKQFCKTCNTQVHLHPKRLNH. Zn(2+) contacts are provided by cysteine 788, cysteine 791, cysteine 799, cysteine 802, cysteine 817, cysteine 820, histidine 825, and histidine 833. Histidine 871 (proton acceptor) is an active-site residue.

The protein belongs to the peptidase C19 family. As to quaternary structure, interacts (via CAP-Gly domain) with IKBKG/NEMO (via proline-rich C-terminal region). Interacts with TRAF2 and TRIP. Interacts with PLK1, DVL1, DVL3, MAVS, TBK1, IKKE and RIGI. Interacts (via CAP-Gly domain) with microtubules. Interacts with HDAC6 and BCL3. Interacts with MAP3K7. Identified in a complex with TRAF6 and SQSTM1. Interacts with OPTN and SQSTM1. Interacts with CEP350. Interacts with RNF31; the interaction is indirect and is mediated via SPATA2. Interacts with SPATA2 (via the PUB domain); the interaction is direct and recruits CYLD to the LUBAC complex, thereby regulating TNF-alpha-induced necroptosis. Phosphorylated on several serine residues by IKKA and/or IKKB in response to immune stimuli. Phosphorylation requires IKBKG. Phosphorylation abolishes TRAF2 deubiquitination, interferes with the activation of Jun kinases, and strongly reduces CD40-dependent gene activation by NF-kappa-B. In terms of processing, ubiquitinated. Polyubiquitinated in hepatocytes treated with palmitic acid. Ubiquitination is mediated by E3 ligase TRIM47 and leads to proteasomal degradation.

It is found in the cytoplasm. Its subcellular location is the perinuclear region. The protein resides in the cytoskeleton. The protein localises to the cell membrane. It localises to the microtubule organizing center. It is found in the centrosome. Its subcellular location is the spindle. The protein resides in the cilium basal body. The catalysed reaction is Thiol-dependent hydrolysis of ester, thioester, amide, peptide and isopeptide bonds formed by the C-terminal Gly of ubiquitin (a 76-residue protein attached to proteins as an intracellular targeting signal).. In terms of biological role, deubiquitinase that specifically cleaves 'Lys-63'- and linear 'Met-1'-linked polyubiquitin chains and is involved in NF-kappa-B activation and TNF-alpha-induced necroptosis. Negatively regulates NF-kappa-B activation by deubiquitinating upstream signaling factors. Contributes to the regulation of cell survival, proliferation and differentiation via its effects on NF-kappa-B activation. Negative regulator of Wnt signaling. Inhibits HDAC6 and thereby promotes acetylation of alpha-tubulin and stabilization of microtubules. Plays a role in the regulation of microtubule dynamics, and thereby contributes to the regulation of cell proliferation, cell polarization, cell migration, and angiogenesis. Required for normal cell cycle progress and normal cytokinesis. Inhibits nuclear translocation of NF-kappa-B. Plays a role in the regulation of inflammation and the innate immune response, via its effects on NF-kappa-B activation. Dispensable for the maturation of intrathymic natural killer cells, but required for the continued survival of immature natural killer cells. Negatively regulates TNFRSF11A signaling and osteoclastogenesis. Involved in the regulation of ciliogenesis, allowing ciliary basal bodies to migrate and dock to the plasma membrane; this process does not depend on NF-kappa-B activation. Ability to remove linear ('Met-1'-linked) polyubiquitin chains regulates innate immunity and TNF-alpha-induced necroptosis: recruited to the LUBAC complex via interaction with SPATA2 and restricts linear polyubiquitin formation on target proteins. Regulates innate immunity by restricting linear polyubiquitin formation on RIPK2 in response to NOD2 stimulation. Involved in TNF-alpha-induced necroptosis by removing linear ('Met-1'-linked) polyubiquitin chains from RIPK1, thereby regulating the kinase activity of RIPK1. Negatively regulates intestinal inflammation by removing 'Lys-63' linked polyubiquitin chain of NLRP6, thereby reducing the interaction between NLRP6 and PYCARD/ASC and formation of the NLRP6 inflammasome. Does not catalyze deubiquitination of heterotypic 'Lys-63'-/'Lys-48'-linked branched ubiquitin chains. Removes 'Lys-63' linked polyubiquitin chain of MAP3K7, which inhibits phosphorylation and blocks downstream activation of the JNK-p38 kinase cascades. Also removes 'Lys-63'-linked polyubiquitin chains of MAP3K1 and MA3P3K3, which inhibit their interaction with MAP2K1 and MAP2K2. This is Ubiquitin carboxyl-terminal hydrolase CYLD (CYLD) from Pongo abelii (Sumatran orangutan).